The primary structure comprises 79 residues: Small ribosomal subunit protein uS17 (79 aa).

It belongs to the universal ribosomal protein uS17 family. As to quaternary structure, part of the 30S ribosomal subunit.

In terms of biological role, one of the primary rRNA binding proteins, it binds specifically to the 5'-end of 16S ribosomal RNA. The sequence is that of Small ribosomal subunit protein uS17 from Roseobacter denitrificans (strain ATCC 33942 / OCh 114) (Erythrobacter sp. (strain OCh 114)).